Here is a 939-residue protein sequence, read N- to C-terminus: Tyrosine-protein kinase Shark (939 aa).

Residues 10-106 (WYHGNLSREA…GLPTKLTVPL (97 aa)) enclose the SH2 1 domain. 3 ANK repeats span residues 153–185 (DGQT…SSDS), 186–218 (FGCQ…GRNI), and 220–252 (NGYV…PRTS). The SH2 2 domain occupies 288–403 (WYHGTLTREE…GLPVSLKYPV (116 aa)). 2 disordered regions span residues 410–446 (EVPS…QHPH) and 476–505 (ALFD…SLAG). Residues 496 to 505 (ESSVSGSLAG) are compositionally biased toward polar residues. The Protein kinase domain maps to 662 to 921 (LVLDREIGHG…PTFVYLTEFF (260 aa)). ATP contacts are provided by residues 668-676 (IGHGEFGSV) and K698. D789 (proton acceptor) is an active-site residue. A Phosphotyrosine modification is found at Y927.

This sequence belongs to the protein kinase superfamily. Tyr protein kinase family. In terms of assembly, interacts with drpr; this is required for the recruitment of drpr and glial cells to severed axons and for the phagocytosis of axonal debris by glial cells following axon injury. In terms of tissue distribution, gastrulation embryos show expression in ectodermal cells along the cephalic furrow and ventral midline. Proctodeum, stomodeum and their derived structures (foregut, atrium, pharynx, esophagus and hindgut) continue to show expression from stage 8-9 to late embryos. Other ectodermally derived structures (frontal sac, salivary gland and labium) and developing tracheal system also show expression.

Its subcellular location is the cytoplasm. It catalyses the reaction L-tyrosyl-[protein] + ATP = O-phospho-L-tyrosyl-[protein] + ADP + H(+). Functionally, following axon injury, required for recruitment of drpr and glial cells to severed axons and for glial clearance of severed axons from the central nervous system. Together with Src42a and drpr, promotes the migration of macrophages to sites of wounding as part of a signaling cascade where Scr42a detects production of hydrogen peroxide at wound sites which triggers phosphorylation of drpr and subsequent recruitment and activation of shark. May be involved in signal transduction on the apical surface of ectodermal epithelial cells, regulating their polarity during invagination. Crumbs (crb) may be the intracellular signal. The protein is Tyrosine-protein kinase Shark of Drosophila melanogaster (Fruit fly).